Here is a 359-residue protein sequence, read N- to C-terminus: 4-hydroxy-3-methylbut-2-en-1-yl diphosphate synthase (flavodoxin) (359 aa).

4 residues coordinate [4Fe-4S] cluster: C264, C267, C299, and E306.

The protein belongs to the IspG family. [4Fe-4S] cluster serves as cofactor.

The enzyme catalyses (2E)-4-hydroxy-3-methylbut-2-enyl diphosphate + oxidized [flavodoxin] + H2O + 2 H(+) = 2-C-methyl-D-erythritol 2,4-cyclic diphosphate + reduced [flavodoxin]. It functions in the pathway isoprenoid biosynthesis; isopentenyl diphosphate biosynthesis via DXP pathway; isopentenyl diphosphate from 1-deoxy-D-xylulose 5-phosphate: step 5/6. In terms of biological role, converts 2C-methyl-D-erythritol 2,4-cyclodiphosphate (ME-2,4cPP) into 1-hydroxy-2-methyl-2-(E)-butenyl 4-diphosphate. The chain is 4-hydroxy-3-methylbut-2-en-1-yl diphosphate synthase (flavodoxin) from Helicobacter pylori (strain ATCC 700392 / 26695) (Campylobacter pylori).